We begin with the raw amino-acid sequence, 249 residues long: Putative type I specificity subunit S.MpnORF615P (249 aa).

Belongs to the type-I restriction system S methylase family. In terms of assembly, the methyltransferase is composed of M and S polypeptides.

Functionally, the specificity (S) subunit of a type I methyltransferase (MTase); this subunit dictates DNA sequence specificity. The single R subunit has multiple frameshifts and is probably not expressed. This chain is Putative type I specificity subunit S.MpnORF615P, found in Mycoplasma pneumoniae (strain ATCC 29342 / M129 / Subtype 1) (Mycoplasmoides pneumoniae).